The sequence spans 52 residues: Phospholamban (52 aa).

Met-1 is modified (N-acetylmethionine). Topologically, residues 1 to 31 (MEKVQYLTRSAIRRASTIEMPQQARQKLQNL) are cytoplasmic. At Ser-16 the chain carries Phosphoserine; by PKA and DMPK. The interval 16–22 (STIEMPQ) is involved in HAX1 binding. Residue Thr-17 is modified to Phosphothreonine; by CaMK2. Residues 32–52 (FINFCLILICLLLICIIVMLL) form a helical membrane-spanning segment. The S-palmitoyl cysteine moiety is linked to residue Cys-36.

It belongs to the phospholamban family. Homopentamer. Can also form heterooligomers with other sarcoplasmic/endoplasmic reticulum calcium ATPase (SERCA) regulators ARLN, ERLN, SLN and STRIT1/DWORF. Monomer. Interacts with HAX1. Interacts as a monomer with ATP2A2; the interaction decreases ATP2A2 Ca(2+) affinity. Interacts with VMP1; VMP1 competes with PLN and SLN to prevent them from forming an inhibitory complex with ATP2A2. Interacts with S100A1 in a Ca(2+)-dependent manner. Phosphorylation by PKA abolishes the inhibition of ATP2A2-mediated calcium uptake. Phosphorylated at Thr-17 by CaMK2, and in response to beta-adrenergic stimulation. Phosphorylation by DMPK may stimulate sarcoplasmic reticulum calcium uptake in cardiomyocytes. Post-translationally, palmitoylated by ZDHHC16, promoting formation of the homopentamer. In terms of processing, in elongated spermatids, proteolytically cleaved by SPPL2C which modulates intracellular Ca(2+) homeostasis. In terms of tissue distribution, heart muscle (at protein level).

Its subcellular location is the endoplasmic reticulum membrane. It is found in the sarcoplasmic reticulum membrane. It localises to the mitochondrion membrane. The protein localises to the membrane. Its function is as follows. Reversibly inhibits the activity of ATP2A2/SERCA2 in cardiac sarcoplasmic reticulum by decreasing the apparent affinity of the ATPase for Ca(2+). Binds preferentially to the ATP-bound E1 conformational form of ATP2A2 which predominates at low Ca(2+) concentrations during the diastolic phase of the cardiac cycle. Inhibits ATP2A2 Ca(2+) affinity by disrupting its allosteric activation by ATP. Modulates the contractility of the heart muscle in response to physiological stimuli via its effects on ATP2A2. Modulates calcium re-uptake during muscle relaxation and plays an important role in calcium homeostasis in the heart muscle. The degree of ATP2A2 inhibition depends on the oligomeric state of PLN. ATP2A2 inhibition is alleviated by PLN phosphorylation. Also inhibits the activity of ATP2A3/SERCA3. Controls intracellular Ca(2+) levels in elongated spermatids and may play a role in germ cell differentiation. In the thalamic reticular nucleus of the brain, plays a role in the regulation of sleep patterns and executive functioning. This Homo sapiens (Human) protein is Phospholamban.